The chain runs to 450 residues: Chromosomal replication initiator protein DnaA 2 (450 aa).

The interval 1-87 (MLTCNECTTW…LEFVVAEHKK (87 aa)) is domain I, interacts with DnaA modulators. The segment at 87–114 (KPSAPVASQKESNEGISEVFEETKDFEL) is domain II. Residues 115–330 (KLNLSYRFDN…GAINKLTAYC (216 aa)) are domain III, AAA+ region. ATP contacts are provided by glycine 159, glycine 161, lysine 162, and threonine 163. The interval 331-450 (RLFGKSLTET…VNLCKNHIVG (120 aa)) is domain IV, binds dsDNA.

It belongs to the DnaA family. As to quaternary structure, oligomerizes as a right-handed, spiral filament on DNA at oriC.

It is found in the cytoplasm. Functionally, plays an essential role in the initiation and regulation of chromosomal replication. ATP-DnaA binds to the origin of replication (oriC) to initiate formation of the DNA replication initiation complex once per cell cycle. Binds the DnaA box (a 9 base pair repeat at the origin) and separates the double-stranded (ds)DNA. Forms a right-handed helical filament on oriC DNA; dsDNA binds to the exterior of the filament while single-stranded (ss)DNA is stabiized in the filament's interior. The ATP-DnaA-oriC complex binds and stabilizes one strand of the AT-rich DNA unwinding element (DUE), permitting loading of DNA polymerase. After initiation quickly degrades to an ADP-DnaA complex that is not apt for DNA replication. Binds acidic phospholipids. The chain is Chromosomal replication initiator protein DnaA 2 from Chlamydia pneumoniae (Chlamydophila pneumoniae).